Reading from the N-terminus, the 95-residue chain is Small ribosomal subunit protein bS6 (95 aa).

This sequence belongs to the bacterial ribosomal protein bS6 family.

Binds together with bS18 to 16S ribosomal RNA. The polypeptide is Small ribosomal subunit protein bS6 (Shouchella clausii (strain KSM-K16) (Alkalihalobacillus clausii)).